The sequence spans 155 residues: uncharacterized protein (155 aa).

This is an uncharacterized protein from Saccharomyces cerevisiae (strain ATCC 204508 / S288c) (Baker's yeast).